Consider the following 334-residue polypeptide: Phosphate acyltransferase (334 aa).

This sequence belongs to the PlsX family. Homodimer. Probably interacts with PlsY.

The protein resides in the cytoplasm. It catalyses the reaction a fatty acyl-[ACP] + phosphate = an acyl phosphate + holo-[ACP]. Its pathway is lipid metabolism; phospholipid metabolism. In terms of biological role, catalyzes the reversible formation of acyl-phosphate (acyl-PO(4)) from acyl-[acyl-carrier-protein] (acyl-ACP). This enzyme utilizes acyl-ACP as fatty acyl donor, but not acyl-CoA. The sequence is that of Phosphate acyltransferase from Mycoplasmopsis agalactiae (strain NCTC 10123 / CIP 59.7 / PG2) (Mycoplasma agalactiae).